The following is a 427-amino-acid chain: Serine--tRNA ligase (427 aa).

230–232 (TSE) contributes to the L-serine binding site. ATP is bound by residues 260–262 (RRE) and V276. Position 283 (E283) interacts with L-serine. Position 347–350 (347–350 (ELTS)) interacts with ATP. T387 is an L-serine binding site.

It belongs to the class-II aminoacyl-tRNA synthetase family. Type-1 seryl-tRNA synthetase subfamily. Homodimer. The tRNA molecule binds across the dimer.

Its subcellular location is the cytoplasm. It catalyses the reaction tRNA(Ser) + L-serine + ATP = L-seryl-tRNA(Ser) + AMP + diphosphate + H(+). It carries out the reaction tRNA(Sec) + L-serine + ATP = L-seryl-tRNA(Sec) + AMP + diphosphate + H(+). It functions in the pathway aminoacyl-tRNA biosynthesis; selenocysteinyl-tRNA(Sec) biosynthesis; L-seryl-tRNA(Sec) from L-serine and tRNA(Sec): step 1/1. Functionally, catalyzes the attachment of serine to tRNA(Ser). Is also able to aminoacylate tRNA(Sec) with serine, to form the misacylated tRNA L-seryl-tRNA(Sec), which will be further converted into selenocysteinyl-tRNA(Sec). This chain is Serine--tRNA ligase, found in Micrococcus luteus (strain ATCC 4698 / DSM 20030 / JCM 1464 / CCM 169 / CCUG 5858 / IAM 1056 / NBRC 3333 / NCIMB 9278 / NCTC 2665 / VKM Ac-2230) (Micrococcus lysodeikticus).